The primary structure comprises 349 residues: Fructose-1,6-bisphosphatase class 1 (349 aa).

Mg(2+) is bound by residues Glu91, Asp110, Leu112, and Asp113. Residues 113–116 (DGSS) and Asn205 contribute to the substrate site. Glu277 serves as a coordination point for Mg(2+).

This sequence belongs to the FBPase class 1 family. In terms of assembly, homotetramer. The cofactor is Mg(2+).

It is found in the cytoplasm. The enzyme catalyses beta-D-fructose 1,6-bisphosphate + H2O = beta-D-fructose 6-phosphate + phosphate. It functions in the pathway carbohydrate biosynthesis; gluconeogenesis. In Rhizobium meliloti (strain 1021) (Ensifer meliloti), this protein is Fructose-1,6-bisphosphatase class 1.